The chain runs to 972 residues: RNA polymerase-associated protein RapA (972 aa).

One can recognise a Helicase ATP-binding domain in the interval 164-334; the sequence is EVGRRYAPRV…FARLRLLDPD (171 aa). 177–184 provides a ligand contact to ATP; the sequence is DEVGLGKT. The DEAH box signature appears at 280-283; it reads DEAH. The 179-residue stretch at 493–671 folds into the Helicase C-terminal domain; it reads RVNWLLEMLK…HEPEALENLI (179 aa).

It belongs to the SNF2/RAD54 helicase family. RapA subfamily. In terms of assembly, interacts with the RNAP. Has a higher affinity for the core RNAP than for the holoenzyme. Its ATPase activity is stimulated by binding to RNAP.

Its function is as follows. Transcription regulator that activates transcription by stimulating RNA polymerase (RNAP) recycling in case of stress conditions such as supercoiled DNA or high salt concentrations. Probably acts by releasing the RNAP, when it is trapped or immobilized on tightly supercoiled DNA. Does not activate transcription on linear DNA. Probably not involved in DNA repair. The sequence is that of RNA polymerase-associated protein RapA from Photobacterium profundum (strain SS9).